We begin with the raw amino-acid sequence, 204 residues long: Serotonin N-acetyltransferase (204 aa).

Threonine 28 is modified (phosphothreonine; by PKA). Positions 32-193 (SEFRCLTPED…SFTELHCSLQ (162 aa)) constitute an N-acetyltransferase domain. Residue leucine 121 participates in substrate binding. Acetyl-CoA is bound by residues 121-123 (LAV) and 129-134 (QQGRGP). Methionine 156 is a substrate binding site. Residue 165–167 (YER) participates in acetyl-CoA binding. Serine 202 is modified (phosphoserine).

The protein belongs to the acetyltransferase family. AANAT subfamily. Monomer. Interacts with several 14-3-3 proteins, including YWHAB, YWHAE, YWHAG and YWHAZ, preferentially when phosphorylated at Thr-28. Phosphorylation on Ser-202 also allows binding to YWHAZ, but with lower affinity. The interaction with YWHAZ considerably increases affinity for arylalkylamines and acetyl-CoA and protects the enzyme from dephosphorylation and proteasomal degradation. It may also prevent thiol-dependent inactivation. Post-translationally, cAMP-dependent phosphorylation regulates AANAT activity by promoting interaction with 14-3-3 proteins. Phosphorylation levels exhibit night/day variations, with an increase during nighttime. Highly expressed in pineal gland and in the photoreceptor outer segments in the retina. Expressed at about 100-fold lower levels in the pituitary gland and testis. Not detected in other tissues.

The protein localises to the cytoplasm. The catalysed reaction is a 2-arylethylamine + acetyl-CoA = an N-acetyl-2-arylethylamine + CoA + H(+). Its pathway is aromatic compound metabolism; melatonin biosynthesis; melatonin from serotonin: step 1/2. In terms of biological role, controls the night/day rhythm of melatonin production in the pineal gland. Catalyzes the N-acetylation of serotonin into N-acetylserotonin, the penultimate step in the synthesis of melatonin. In Macaca mulatta (Rhesus macaque), this protein is Serotonin N-acetyltransferase (AANAT).